Consider the following 240-residue polypeptide: Enoyl-CoA delta isomerase 1, peroxisomal (240 aa).

Positions 238-240 (SKL) match the Microbody targeting signal motif.

This sequence belongs to the enoyl-CoA hydratase/isomerase family.

It localises to the peroxisome. It carries out the reaction a (3Z)-enoyl-CoA = a 4-saturated (2E)-enoyl-CoA. The catalysed reaction is a (3E)-enoyl-CoA = a 4-saturated (2E)-enoyl-CoA. It participates in lipid metabolism; fatty acid beta-oxidation. Its function is as follows. Able to isomerize both 3-cis and 3-trans double bonds into the 2-trans form in a range of enoyl-CoA species. Essential for the beta oxidation of unsaturated fatty acids. The chain is Enoyl-CoA delta isomerase 1, peroxisomal from Arabidopsis thaliana (Mouse-ear cress).